Here is a 305-residue protein sequence, read N- to C-terminus: Ribosomal RNA small subunit methyltransferase H (305 aa).

Residues 37-39, Asp-57, Phe-85, Asp-101, and His-108 each bind S-adenosyl-L-methionine; that span reads GGH.

Belongs to the methyltransferase superfamily. RsmH family.

It is found in the cytoplasm. It catalyses the reaction cytidine(1402) in 16S rRNA + S-adenosyl-L-methionine = N(4)-methylcytidine(1402) in 16S rRNA + S-adenosyl-L-homocysteine + H(+). Specifically methylates the N4 position of cytidine in position 1402 (C1402) of 16S rRNA. This Parabacteroides distasonis (strain ATCC 8503 / DSM 20701 / CIP 104284 / JCM 5825 / NCTC 11152) protein is Ribosomal RNA small subunit methyltransferase H.